A 182-amino-acid chain; its full sequence is Ribosome maturation factor RimP (182 aa).

This sequence belongs to the RimP family.

It is found in the cytoplasm. Functionally, required for maturation of 30S ribosomal subunits. The sequence is that of Ribosome maturation factor RimP from Chloroherpeton thalassium (strain ATCC 35110 / GB-78).